A 141-amino-acid chain; its full sequence is Large ribosomal subunit protein uL22 (141 aa).

This sequence belongs to the universal ribosomal protein uL22 family. Part of the 50S ribosomal subunit.

This protein binds specifically to 23S rRNA; its binding is stimulated by other ribosomal proteins, e.g. L4, L17, and L20. It is important during the early stages of 50S assembly. It makes multiple contacts with different domains of the 23S rRNA in the assembled 50S subunit and ribosome. In terms of biological role, the globular domain of the protein is located near the polypeptide exit tunnel on the outside of the subunit, while an extended beta-hairpin is found that lines the wall of the exit tunnel in the center of the 70S ribosome. This chain is Large ribosomal subunit protein uL22, found in Frankia casuarinae (strain DSM 45818 / CECT 9043 / HFP020203 / CcI3).